The chain runs to 1462 residues: Trifunctional nucleotide phosphoesterase protein YfkN (1462 aa).

Positions Met1 to Ala35 are cleaved as a signal peptide. The tract at residues Glu36–Leu623 is 2',3'-cyclic nucleotide 2'-phosphodiesterase/3'-nucleotidase. The a divalent metal cation site is built by Asp52, His54, Asp97, Asn141, His249, His282, and His284. A ribonucleoside 3'-phosphate contacts are provided by residues Tyr458 and Tyr561–Gly567. The interval Leu624–Thr1427 is 5'-nucleotidase. Positions 676, 678, 708, 740, 872, 895, and 897 each coordinate a divalent metal cation. A ribonucleoside 5'-phosphate is bound by residues Phe1047 and Phe1127–Asp1133. A disordered region spans residues Ile1350–Gly1422. Residues Gly1405–Gly1421 show a composition bias toward gly residues. Residues Leu1424–Ala1428 carry the LPXTG sorting signal motif. Position 1427 is a pentaglycyl murein peptidoglycan amidated threonine (Thr1427). Residues Ala1428 to Ala1462 constitute a propeptide, removed by sortase.

It belongs to the 5'-nucleotidase family. A divalent metal cation serves as cofactor.

Its subcellular location is the secreted. The protein localises to the cell wall. It carries out the reaction a nucleoside 2',3'-cyclic phosphate + H2O = a nucleoside 3'-phosphate + H(+). It catalyses the reaction a ribonucleoside 3'-phosphate + H2O = a ribonucleoside + phosphate. The enzyme catalyses a ribonucleoside 5'-phosphate + H2O = a ribonucleoside + phosphate. In terms of biological role, catalyzes the release of inorganic phosphate from 2',3'-cyclic nucleotides through consecutive 2',3'-phosphodiesterase and 3'- (or 2') nucleotidase activities. Also possesses a 5'-nucleotidase activity. Does not catalyze the release of inorganic phosphate from 3',5'-cyclic nucleotides. Probably plays a role in the cellular reprocessing of nucleotides present in the medium, under conditions of phosphate shortage. In Bacillus subtilis (strain 168), this protein is Trifunctional nucleotide phosphoesterase protein YfkN (yfkN).